Reading from the N-terminus, the 264-residue chain is H-2 class II histocompatibility antigen, E-Q beta chain (264 aa).

A signal peptide spans 1-26 (MVWLPRVPCVAAVILLLTVLSPPVAL). The tract at residues 27-121 (VRDSRPWFLE…IFDNFLVRRR (95 aa)) is beta-1. The Extracellular segment spans residues 27-225 (VRDSRPWFLE…KAQSTSAQNK (199 aa)). 2 disulfides stabilise this stretch: cysteine 38–cysteine 106 and cysteine 144–cysteine 200. The N-linked (GlcNAc...) asparagine glycan is linked to asparagine 46. A beta-2 region spans residues 122 to 225 (VEPTVTVYPT…KAQSTSAQNK (104 aa)). One can recognise an Ig-like C1-type domain in the interval 124–214 (PTVTVYPTKT…PSLTDPVTVE (91 aa)). A helical transmembrane segment spans residues 226–246 (MLSGVGGFVLGLLFLGAGLFI). The Cytoplasmic portion of the chain corresponds to 247 to 264 (YFRNQKGQSGLQPTGLLS).

The protein belongs to the MHC class II family.

The protein localises to the membrane. The chain is H-2 class II histocompatibility antigen, E-Q beta chain from Mus musculus (Mouse).